The sequence spans 265 residues: Small ribosomal subunit protein uS2 (265 aa).

It belongs to the universal ribosomal protein uS2 family.

The polypeptide is Small ribosomal subunit protein uS2 (Aliarcobacter butzleri (strain RM4018) (Arcobacter butzleri)).